Here is a 373-residue protein sequence, read N- to C-terminus: MGYVAIKGGGRAIAGAEAAVEALRCAEGPAGTPLTLSAIEQQLRLLTSRVVSEGGLYHPRLAALAIKQMQGDTLEAAFALRAYRSTKPRLMDVPVQDTSRMRLIRRISSAFKDIPGGQMLGPTTDYALRLMRLDLANESPEDFRAVSRRFLDSVADTDLPDSFPKVVDALRDEGLLPPLTRRAHAAFDITRDPLVFPVPRSAALATMARAETGSLLAIAYSNMRGYGDVHPTIAELRVGYVPVMLPHPVTGEPIEAGEVLMTECEVVAMFEGDATDGPPTFTLGYGACFGHNEVKAIAMAILDRALQKGMRDGPSNPSEDPEFVLLHVDGVDSMGFASHYKMPHYVTFQSDMDRLRTTQDKATAQPTQEGAPS.

It belongs to the PhnI family.

Belongs to an operon involved in hypophosphite oxidation. Exact function not known. In Stutzerimonas stutzeri (Pseudomonas stutzeri), this protein is Putative C-P lyase subunit protein HtxH (htxH).